A 100-amino-acid chain; its full sequence is Class II hydrophobin CU (100 aa).

The N-terminal stretch at 1–25 (MQFSIATIALFLSSAMAAPYSGNSN) is a signal peptide. Disulfide bonds link Cys-32–Cys-82, Cys-42–Cys-72, Cys-43–Cys-55, and Cys-83–Cys-94.

Belongs to the cerato-ulmin hydrophobin family. As to quaternary structure, homotetramer. Further self-assembles to form highly ordered films at water-air interfaces through intermolecular interactions.

It localises to the secreted. The protein localises to the cell wall. Functionally, aerial growth, conidiation, and dispersal of filamentous fungi in the environment rely upon a capability of their secreting small amphipathic proteins called hydrophobins (HPBs) with low sequence identity. Class I can self-assemble into an outermost layer of rodlet bundles on aerial cell surfaces, conferring cellular hydrophobicity that supports fungal growth, development and dispersal; whereas Class II form highly ordered films at water-air interfaces through intermolecular interactions but contribute nothing to the rodlet structure. CU is a class II hydrophobin that is implicated in the pathogenicity of this fungus on elm trees. Required for hydrophobicity and adherence of the cells and acts as a parasitic fitness factor by protecting infectious propagules from desiccation. Reduces the interfacial tension of both oil-water and air-water interfaces. The protein is Class II hydrophobin CU of Ophiostoma ulmi (Dutch elm disease fungus).